The primary structure comprises 386 residues: O-phospho-L-seryl-tRNA:Cys-tRNA synthase (386 aa).

Pyridoxal 5'-phosphate is bound by residues 89-90 (AR), Asn196, and 219-221 (SGH). Lys222 bears the N6-(pyridoxal phosphate)lysine mark.

It belongs to the SepCysS family. Homodimer. Interacts with SepRS. The cofactor is pyridoxal 5'-phosphate.

The enzyme catalyses O-phospho-L-seryl-tRNA(Cys) + hydrogen sulfide + H(+) = L-cysteinyl-tRNA(Cys) + phosphate. Its function is as follows. Converts O-phospho-L-seryl-tRNA(Cys) (Sep-tRNA(Cys)) to L-cysteinyl-tRNA(Cys) (Cys-tRNA(Cys)). This is O-phospho-L-seryl-tRNA:Cys-tRNA synthase from Methanosarcina acetivorans (strain ATCC 35395 / DSM 2834 / JCM 12185 / C2A).